The sequence spans 42 residues: Photosystem I reaction center subunit IX (42 aa).

The chain crosses the membrane as a helical span at residues 7–27 (YLSTAPVLATIWFIILAGLLI).

It belongs to the PsaJ family.

It is found in the plastid. The protein resides in the chloroplast thylakoid membrane. May help in the organization of the PsaE and PsaF subunits. The protein is Photosystem I reaction center subunit IX of Mesostigma viride (Green alga).